We begin with the raw amino-acid sequence, 400 residues long: Tryptophan synthase beta chain (400 aa).

K92 is modified (N6-(pyridoxal phosphate)lysine).

It belongs to the TrpB family. Tetramer of two alpha and two beta chains. Requires pyridoxal 5'-phosphate as cofactor.

The catalysed reaction is (1S,2R)-1-C-(indol-3-yl)glycerol 3-phosphate + L-serine = D-glyceraldehyde 3-phosphate + L-tryptophan + H2O. It participates in amino-acid biosynthesis; L-tryptophan biosynthesis; L-tryptophan from chorismate: step 5/5. The beta subunit is responsible for the synthesis of L-tryptophan from indole and L-serine. The sequence is that of Tryptophan synthase beta chain from Neisseria gonorrhoeae.